The following is a 1336-amino-acid chain: Glutamate receptor ionotropic, NMDA 2D (1336 aa).

Residues 1–27 (MRGAGGPRGPRGPAKMLLLLALACASP) form the signal peptide. The Extracellular portion of the chain corresponds to 28–582 (FPEEAPGPGG…SPSAFLEPYS (555 aa)). N92 is a glycosylation site (N-linked (GlcNAc...) asparagine). C104 and C348 form a disulfide bridge. 4 N-linked (GlcNAc...) asparagine glycosylation sites follow: N352, N366, N384, and N467. Cystine bridges form between C455–C483 and C462–C484. 3 residues coordinate L-glutamate: S539, T541, and R546. N-linked (GlcNAc...) asparagine glycosylation occurs at N569. The chain crosses the membrane as a helical span at residues 583–604 (PAVWVMMFVMCLTVVAVTVFIF). Over 605-629 (EYLSPVGYNRSLATGKRPGGSTFTI) the chain is Cytoplasmic. An intramembrane region (discontinuously helical) is located at residues 630 to 641 (GKSIWLLWALVF). Residues 631 to 650 (KSIWLLWALVFNNSVPVENP) form a pore-forming region. At 642 to 653 (NNSVPVENPRGT) the chain is on the cytoplasmic side. A helical membrane pass occupies residues 654-674 (TSKIMVLVWAFFAVIFLASYT). Topologically, residues 675-843 (ANLAAFMIQE…EVMSSKLDID (169 aa)) are extracellular. L-glutamate contacts are provided by S717, T718, and D759. A disulfide bond links C773 and C828. A helical membrane pass occupies residues 844–867 (NMAGVFYMLLVAMGLSLLVFAWEH). The Cytoplasmic portion of the chain corresponds to 868-1336 (LVYWRLRHCL…AHFSSLESEV (469 aa)). Disordered regions lie at residues 900–934 (EAAPPPAKPPPPPQPLPSPAYPAPRPAPGPAPFVP), 981–1123 (RAAP…SLGG), and 1225–1336 (RCGC…ESEV). The span at 902-932 (APPPAKPPPPPQPLPSPAYPAPRPAPGPAPF) shows a compositional bias: pro residues. Positions 981–991 (RAAPRGAAGRP) are enriched in low complexity. The span at 992–1006 (LSPPAAQPPQKPPPS) shows a compositional bias: pro residues. Low complexity predominate over residues 1035–1044 (AAAATAVGPP). A compositionally biased stretch (gly residues) spans 1074 to 1089 (PGAGGAGGTGGAGGGA). The segment covering 1091-1104 (AAPPPCRAAPPPCP) has biased composition (pro residues). Residues 1225 to 1240 (RCGCPRSHPHRPRASH) show a composition bias toward basic residues. R1316 is modified (omega-N-methylarginine). A Phosphoserine modification is found at S1326. Positions 1334–1336 (SEV) match the PDZ-binding motif.

This sequence belongs to the glutamate-gated ion channel (TC 1.A.10.1) family. NR2D/GRIN2D subfamily. As to quaternary structure, heterotetramer. Forms heterotetrameric channels composed of two GluN1/zeta subunits (GRIN1), and two identical GluN2/epsilon subunits (GRIN2A, GRIN2B, GRIN2C or GRIN2D) or GluN3 subunits (GRIN3A or GRIN3B) (in vitro). In vivo, the subunit composition may depend on the expression levels of the different subunits. Interacts with PDZ domains of PATJ and DLG4.

It is found in the cell membrane. The protein localises to the postsynaptic cell membrane. It carries out the reaction Ca(2+)(in) = Ca(2+)(out). The catalysed reaction is Na(+)(in) = Na(+)(out). It catalyses the reaction K(+)(in) = K(+)(out). In terms of biological role, component of N-methyl-D-aspartate (NMDA) receptors (NMDARs) that function as heterotetrameric, ligand-gated cation channels with high calcium permeability and voltage-dependent block by Mg(2+). Participates in synaptic plasticity for learning and memory formation. Channel activation requires binding of the neurotransmitter L-glutamate to the GluN2 subunit, glycine or D-serine binding to the GluN1 subunit, plus membrane depolarization to eliminate channel inhibition by Mg(2+). NMDARs mediate simultaneously the potasium efflux and the influx of calcium and sodium. Each GluN2 subunit confers differential attributes to channel properties, including activation, deactivation and desensitization kinetics, pH sensitivity, Ca2(+) permeability, and binding to allosteric modulators. The chain is Glutamate receptor ionotropic, NMDA 2D from Homo sapiens (Human).